A 975-amino-acid polypeptide reads, in one-letter code: Protein HIRA (975 aa).

WD repeat units follow at residues 10–50, 64–103, 123–162, 165–204, 214–256, 259–331, and 335–374; these read RHEG…KDND, DHFG…GTSE, GHTA…CTAV, GHSS…LAHR, GSTF…ATFD, GHNA…PLFV, and FFTQ…LGYR. Residues 418–433 are compositionally biased toward low complexity; it reads KKVSSVQQFQSPPKVS. 2 disordered regions span residues 418–510 and 948–975; these read KKVS…RSQN and NVEQ…NGAS. Residues 435–445 are compositionally biased toward polar residues; the sequence is DAPNPSTSVPN. Basic and acidic residues predominate over residues 478–492; sequence KQREYRRPDGRKRII. Polar residues predominate over residues 499–510; the sequence is PSNQDMSNRSQN. Residues 923-954 are a coiled coil; the sequence is ATNRKVQRLLNEFMDLLSEYEAAETNVEQMDV.

This sequence belongs to the WD repeat HIR1 family.

Its subcellular location is the nucleus. Its function is as follows. Histone chaperone involved in maintining knox genes silencing throughout leaf development. In Oryza sativa subsp. japonica (Rice), this protein is Protein HIRA.